The following is a 411-amino-acid chain: Bifunctional protein GlmU (411 aa).

Residues Met-1–Lys-204 are pyrophosphorylase. UTP is bound by residues Leu-6–Gly-9, Gln-74, and Gly-79. 4 residues coordinate N-acetyl-alpha-D-glucosamine 1-phosphate: Thr-80, Gly-130, Asn-142, and Asn-158. The linker stretch occupies residues Gly-205–Leu-224. The tract at residues Asn-225–Asn-411 is N-acetyltransferase. Residue His-308 is the Proton acceptor of the active site. 2 residues coordinate acetyl-CoA: Ala-384 and Lys-401.

It in the N-terminal section; belongs to the N-acetylglucosamine-1-phosphate uridyltransferase family. In the C-terminal section; belongs to the transferase hexapeptide repeat family.

It catalyses the reaction N-acetyl-alpha-D-glucosamine 1-phosphate + UTP + H(+) = UDP-N-acetyl-alpha-D-glucosamine + diphosphate. The catalysed reaction is alpha-D-glucosamine 1-phosphate + acetyl-CoA = N-acetyl-alpha-D-glucosamine 1-phosphate + CoA + H(+). It functions in the pathway nucleotide-sugar biosynthesis; UDP-N-acetyl-alpha-D-glucosamine biosynthesis; N-acetyl-alpha-D-glucosamine 1-phosphate from alpha-D-glucosamine 6-phosphate (route II): step 2/2. The protein operates within nucleotide-sugar biosynthesis; UDP-N-acetyl-alpha-D-glucosamine biosynthesis; UDP-N-acetyl-alpha-D-glucosamine from N-acetyl-alpha-D-glucosamine 1-phosphate: step 1/1. In terms of biological role, catalyzes the last two sequential reactions in the de novo biosynthetic pathway for UDP-N-acetyl-glucosamine (UDP-GlcNAc). Responsible for the acetylation of GlcN-1-P to GlcNAc-1-P, and for the uridyl transfer from UTP to GlcNAc-1-P, to produce UDP-GlcNAc and pyrophosphate. This Methanococcus maripaludis (strain DSM 14266 / JCM 13030 / NBRC 101832 / S2 / LL) protein is Bifunctional protein GlmU.